The sequence spans 718 residues: Homeobox-leucine zipper protein HDG9 (718 aa).

Residues 1 to 12 (MDFTRDDNSSDE) show a composition bias toward basic and acidic residues. Residues 1 to 35 (MDFTRDDNSSDERENDVDANTNNRHEKKGYHRHTN) form a disordered region. Positions 26–85 (EKKGYHRHTNEQIHRLETYFKECPHPDEFQRRLLGEELNLKPKQIKFWFQNKRTQAKSHN) form a DNA-binding region, homeobox. Residues 78–152 (RTQAKSHNEK…LKDEYERVSN (75 aa)) adopt a coiled-coil conformation. Residues 169 to 209 (PYLHGPSNHASTSKNRPALYGTSSNRLPEPSSIFRGPYTRG) form a disordered region. Polar residues predominate over residues 176–194 (NHASTSKNRPALYGTSSNR). Positions 232–464 (SQLEKIAMLE…LERTCERLIF (233 aa)) constitute an START domain.

This sequence belongs to the HD-ZIP homeobox family. Class IV subfamily. Expressed in anthers with highest levels in the tapetum and pollen grains, and chalazal end of the embryo sac.

The protein resides in the nucleus. Probable transcription factor that binds to the DNA sequence 5'-GCATTAAATGCGCA-3'. The protein is Homeobox-leucine zipper protein HDG9 (HDG9) of Arabidopsis thaliana (Mouse-ear cress).